We begin with the raw amino-acid sequence, 740 residues long: Elongation factor 2 (740 aa).

The region spanning 23–264 (AQIRNAGTLA…MIIEHVPPPN (242 aa)) is the tr-type G domain. Residues 32–39 (AHVDHGKT), 98–102 (DTPGH), and 152–155 (NKID) each bind GTP. His-605 is subject to Diphthamide.

Belongs to the TRAFAC class translation factor GTPase superfamily. Classic translation factor GTPase family. EF-G/EF-2 subfamily.

It is found in the cytoplasm. Functionally, catalyzes the GTP-dependent ribosomal translocation step during translation elongation. During this step, the ribosome changes from the pre-translocational (PRE) to the post-translocational (POST) state as the newly formed A-site-bound peptidyl-tRNA and P-site-bound deacylated tRNA move to the P and E sites, respectively. Catalyzes the coordinated movement of the two tRNA molecules, the mRNA and conformational changes in the ribosome. The protein is Elongation factor 2 of Pyrobaculum islandicum (strain DSM 4184 / JCM 9189 / GEO3).